The sequence spans 207 residues: Small ribosomal subunit protein uS4c (207 aa).

Residues 92–155 (MRLDNILFRL…TYQSILSKRI (64 aa)) form the S4 RNA-binding domain.

The protein belongs to the universal ribosomal protein uS4 family. Part of the 30S ribosomal subunit. Contacts protein S5. The interaction surface between S4 and S5 is involved in control of translational fidelity.

It localises to the plastid. The protein localises to the chloroplast. One of the primary rRNA binding proteins, it binds directly to 16S rRNA where it nucleates assembly of the body of the 30S subunit. Functionally, with S5 and S12 plays an important role in translational accuracy. The polypeptide is Small ribosomal subunit protein uS4c (rps4) (Equisetum scirpoides (Dwarf-scouring rush)).